Consider the following 414-residue polypeptide: UDP-N-acetylmuramoylalanine--D-glutamate ligase (414 aa).

104–110 (GSNGKST) is a binding site for ATP.

This sequence belongs to the MurCDEF family.

The protein localises to the cytoplasm. It catalyses the reaction UDP-N-acetyl-alpha-D-muramoyl-L-alanine + D-glutamate + ATP = UDP-N-acetyl-alpha-D-muramoyl-L-alanyl-D-glutamate + ADP + phosphate + H(+). It participates in cell wall biogenesis; peptidoglycan biosynthesis. Functionally, cell wall formation. Catalyzes the addition of glutamate to the nucleotide precursor UDP-N-acetylmuramoyl-L-alanine (UMA). The sequence is that of UDP-N-acetylmuramoylalanine--D-glutamate ligase from Francisella philomiragia subsp. philomiragia (strain ATCC 25017 / CCUG 19701 / FSC 153 / O#319-036).